Here is a 208-residue protein sequence, read N- to C-terminus: 3-isopropylmalate dehydratase small subunit (208 aa).

The protein belongs to the LeuD family. LeuD type 1 subfamily. In terms of assembly, heterodimer of LeuC and LeuD.

The enzyme catalyses (2R,3S)-3-isopropylmalate = (2S)-2-isopropylmalate. It functions in the pathway amino-acid biosynthesis; L-leucine biosynthesis; L-leucine from 3-methyl-2-oxobutanoate: step 2/4. Its function is as follows. Catalyzes the isomerization between 2-isopropylmalate and 3-isopropylmalate, via the formation of 2-isopropylmaleate. The protein is 3-isopropylmalate dehydratase small subunit (leuD) of Cupriavidus necator (Alcaligenes eutrophus).